We begin with the raw amino-acid sequence, 166 residues long: Coiled-coil domain-containing protein 12 (166 aa).

Residue M1 is modified to N-acetylmethionine. A coiled-coil region spans residues 8–28 (VGRLEEEALRRKERLKALREK). Over residues 21 to 53 (RLKALREKTGRKDREDGEPQTKQLREEGEEVGK) the composition is skewed to basic and acidic residues. The disordered stretch occupies residues 21-55 (RLKALREKTGRKDREDGEPQTKQLREEGEEVGKHR). N6-acetyllysine is present on K53. K94 participates in a covalent cross-link: Glycyl lysine isopeptide (Lys-Gly) (interchain with G-Cter in SUMO2). A coiled-coil region spans residues 115–144 (DLKRDVAKKLEKLEKRTQRAIAELIRERLK). The segment at 146–166 (QEDSLASAVDATTGQEACDSD) is disordered. A phosphoserine mark is found at S149 and S165.

This chain is Coiled-coil domain-containing protein 12 (Ccdc12), found in Mus musculus (Mouse).